Consider the following 187-residue polypeptide: Threonylcarbamoyl-AMP synthase (187 aa).

The region spanning Gln-4–Gly-187 is the YrdC-like domain.

Belongs to the SUA5 family. TsaC subfamily.

The protein resides in the cytoplasm. The enzyme catalyses L-threonine + hydrogencarbonate + ATP = L-threonylcarbamoyladenylate + diphosphate + H2O. Required for the formation of a threonylcarbamoyl group on adenosine at position 37 (t(6)A37) in tRNAs that read codons beginning with adenine. Catalyzes the conversion of L-threonine, HCO(3)(-)/CO(2) and ATP to give threonylcarbamoyl-AMP (TC-AMP) as the acyladenylate intermediate, with the release of diphosphate. In Pseudoalteromonas translucida (strain TAC 125), this protein is Threonylcarbamoyl-AMP synthase.